Here is a 175-residue protein sequence, read N- to C-terminus: Adenine phosphoribosyltransferase (175 aa).

It belongs to the purine/pyrimidine phosphoribosyltransferase family. In terms of assembly, homodimer.

It localises to the cytoplasm. The catalysed reaction is AMP + diphosphate = 5-phospho-alpha-D-ribose 1-diphosphate + adenine. It functions in the pathway purine metabolism; AMP biosynthesis via salvage pathway; AMP from adenine: step 1/1. Catalyzes a salvage reaction resulting in the formation of AMP, that is energically less costly than de novo synthesis. The protein is Adenine phosphoribosyltransferase of Thermosipho melanesiensis (strain DSM 12029 / CIP 104789 / BI429).